Reading from the N-terminus, the 179-residue chain is UPF0398 protein SSU05_0416 (179 aa).

Belongs to the UPF0398 family.

The chain is UPF0398 protein SSU05_0416 from Streptococcus suis (strain 05ZYH33).